A 202-amino-acid polypeptide reads, in one-letter code: Potassium-transporting ATPase KdpC subunit (202 aa).

The chain crosses the membrane as a helical span at residues 7 to 27; it reads PAIFVLLALTLITGLLYPLAM. The tract at residues 66–103 is disordered; sequence FHGRPSATSTADPNDSTKTVPAPYNAANSSGSNLGPTS. 2 stretches are compositionally biased toward polar residues: residues 71 to 84 and 91 to 101; these read SATS…STKT and AANSSGSNLGP.

The protein belongs to the KdpC family. As to quaternary structure, the system is composed of three essential subunits: KdpA, KdpB and KdpC.

The protein resides in the cell inner membrane. Part of the high-affinity ATP-driven potassium transport (or Kdp) system, which catalyzes the hydrolysis of ATP coupled with the electrogenic transport of potassium into the cytoplasm. This subunit acts as a catalytic chaperone that increases the ATP-binding affinity of the ATP-hydrolyzing subunit KdpB by the formation of a transient KdpB/KdpC/ATP ternary complex. In Bradyrhizobium sp. (strain ORS 278), this protein is Potassium-transporting ATPase KdpC subunit.